Here is a 148-residue protein sequence, read N- to C-terminus: Glutamate mutase sigma subunit (148 aa).

Positions 3–140 (NPTIVIGVIG…KRDIERVMQS (138 aa)) constitute a B12-binding domain. Adenosylcob(III)alamin contacts are provided by residues 13 to 17 (ADCHA), histidine 16, 61 to 63 (SSI), and 93 to 97 (NLVIG).

This sequence belongs to the methylaspartate mutase GlmS subunit family. In terms of assembly, heterotetramer composed of 2 epsilon subunits (GlmE) and 2 sigma subunits (GlmS). GlmE exists as a homodimer and GlmS as a monomer. Requires adenosylcob(III)alamin as cofactor.

The enzyme catalyses (2S,3S)-3-methyl-L-aspartate = L-glutamate. It participates in amino-acid degradation; L-glutamate degradation via mesaconate pathway; acetate and pyruvate from L-glutamate: step 1/4. Functionally, catalyzes the carbon skeleton rearrangement of L-glutamate to L-threo-3-methylaspartate ((2S,3S)-3-methylaspartate). The chain is Glutamate mutase sigma subunit from Yersinia enterocolitica serotype O:8 / biotype 1B (strain NCTC 13174 / 8081).